The chain runs to 479 residues: Proline--tRNA ligase 2 (479 aa).

The protein belongs to the class-II aminoacyl-tRNA synthetase family. ProS type 3 subfamily. In terms of assembly, homodimer.

It is found in the cytoplasm. It carries out the reaction tRNA(Pro) + L-proline + ATP = L-prolyl-tRNA(Pro) + AMP + diphosphate. Its function is as follows. Catalyzes the attachment of proline to tRNA(Pro) in a two-step reaction: proline is first activated by ATP to form Pro-AMP and then transferred to the acceptor end of tRNA(Pro). The polypeptide is Proline--tRNA ligase 2 (Rhodococcus jostii (strain RHA1)).